We begin with the raw amino-acid sequence, 550 residues long: Hydroxylamine reductase (550 aa).

4 residues coordinate [4Fe-4S] cluster: Cys-7, Cys-10, Cys-19, and Cys-25. Hybrid [4Fe-2O-2S] cluster-binding residues include His-244, Glu-268, Cys-312, Cys-405, Cys-433, Cys-458, Glu-493, and Lys-495. Cysteine persulfide is present on Cys-405.

Belongs to the HCP family. [4Fe-4S] cluster is required as a cofactor. Requires hybrid [4Fe-2O-2S] cluster as cofactor.

Its subcellular location is the cytoplasm. It carries out the reaction A + NH4(+) + H2O = hydroxylamine + AH2 + H(+). Functionally, catalyzes the reduction of hydroxylamine to form NH(3) and H(2)O. The polypeptide is Hydroxylamine reductase (Porphyromonas gingivalis (strain ATCC BAA-308 / W83)).